We begin with the raw amino-acid sequence, 109 residues long: Nucleoid-associated protein Sputw3181_1707 (109 aa).

It belongs to the YbaB/EbfC family. As to quaternary structure, homodimer.

The protein localises to the cytoplasm. It localises to the nucleoid. Its function is as follows. Binds to DNA and alters its conformation. May be involved in regulation of gene expression, nucleoid organization and DNA protection. This is Nucleoid-associated protein Sputw3181_1707 from Shewanella sp. (strain W3-18-1).